The primary structure comprises 402 residues: Palmitoyltransferase PFA4 (402 aa).

Topologically, residues 1-8 (MAVQLKWP) are cytoplasmic. A helical membrane pass occupies residues 9–29 (IIGVVIPCVLIAMVAYGSHYF). At 30-39 (VFRTNLSRTE) the chain is on the lumenal side. A helical membrane pass occupies residues 40 to 60 (QILYEVYVCIVWLSYYLAIVV). Residues 61-125 (DPGSPPKNFT…GHNNLPHFLR (65 aa)) lie on the Cytoplasmic side of the membrane. Residues 78–128 (RWCKKCQNYKPERSHHCKTCNKCVLKMDHHCPWTYNCVGHNNLPHFLRFVF) form the DHHC domain. The active-site S-palmitoyl cysteine intermediate is Cys108. The helical transmembrane segment at 126–146 (FVFFLIVGMTYVLFQLGKQVL) threads the bilayer. Residues 147–165 (HYYDSSKLPSYLIDKKEMC) lie on the Lumenal side of the membrane. Residues 166 to 186 (AVIFLLPVTFFVFVSIIILFV) traverse the membrane as a helical segment. Topologically, residues 187 to 402 (RCMINLLFRG…LVSKDEISNN (216 aa)) are cytoplasmic.

The protein belongs to the DHHC palmitoyltransferase family. PFA4 subfamily.

The protein resides in the endoplasmic reticulum membrane. It carries out the reaction L-cysteinyl-[protein] + hexadecanoyl-CoA = S-hexadecanoyl-L-cysteinyl-[protein] + CoA. Its function is as follows. Mediates the reversible addition of palmitate to target proteins, thereby regulating their membrane association and biological function. The protein is Palmitoyltransferase PFA4 of Debaryomyces hansenii (strain ATCC 36239 / CBS 767 / BCRC 21394 / JCM 1990 / NBRC 0083 / IGC 2968) (Yeast).